Reading from the N-terminus, the 266-residue chain is Large ribosomal subunit protein eL8 (266 aa).

Basic residues predominate over residues 1–11 (MPKGKKAKGKK). The disordered stretch occupies residues 1–21 (MPKGKKAKGKKVAPAPSVAKK).

Belongs to the eukaryotic ribosomal protein eL8 family. Component of the large ribosomal subunit.

Its subcellular location is the cytoplasm. Functionally, component of the large ribosomal subunit. The ribosome is a large ribonucleoprotein complex responsible for the synthesis of proteins in the cell. In Ictalurus punctatus (Channel catfish), this protein is Large ribosomal subunit protein eL8 (rpl7a).